The chain runs to 144 residues: Large ribosomal subunit protein uL13 (144 aa).

This sequence belongs to the universal ribosomal protein uL13 family. As to quaternary structure, part of the 50S ribosomal subunit.

In terms of biological role, this protein is one of the early assembly proteins of the 50S ribosomal subunit, although it is not seen to bind rRNA by itself. It is important during the early stages of 50S assembly. This is Large ribosomal subunit protein uL13 from Clostridium novyi (strain NT).